The sequence spans 1126 residues: DNA-directed RNA polymerase subunit Rpo2 (1126 aa).

4 residues coordinate Zn(2+): C1060, C1063, C1078, and H1081.

The protein belongs to the RNA polymerase beta chain family. In terms of assembly, part of the 13-subunit RNA polymerase complex. Interacts with TFS4. As to quaternary structure, (Microbial infection) Binds viral protein RIP which blocks global transcription. Zn(2+) is required as a cofactor.

The protein localises to the cytoplasm. The catalysed reaction is RNA(n) + a ribonucleoside 5'-triphosphate = RNA(n+1) + diphosphate. Its function is as follows. DNA-dependent RNA polymerase (RNAP) catalyzes the transcription of DNA into RNA using the four ribonucleoside triphosphates as substrates. This subunit is involved in DNA promoter recognition. This is DNA-directed RNA polymerase subunit Rpo2 from Sulfolobus acidocaldarius (strain ATCC 33909 / DSM 639 / JCM 8929 / NBRC 15157 / NCIMB 11770).